A 101-amino-acid polypeptide reads, in one-letter code: NAD(P)H-quinone oxidoreductase subunit 4L, chloroplastic (101 aa).

3 consecutive transmembrane segments (helical) span residues 2-22, 32-52, and 61-81; these read ILEH…YGLI, MCLE…SDFF, and IFSI…PAIL.

The protein belongs to the complex I subunit 4L family. In terms of assembly, NDH is composed of at least 16 different subunits, 5 of which are encoded in the nucleus.

The protein localises to the plastid. It localises to the chloroplast thylakoid membrane. The catalysed reaction is a plastoquinone + NADH + (n+1) H(+)(in) = a plastoquinol + NAD(+) + n H(+)(out). It catalyses the reaction a plastoquinone + NADPH + (n+1) H(+)(in) = a plastoquinol + NADP(+) + n H(+)(out). Its function is as follows. NDH shuttles electrons from NAD(P)H:plastoquinone, via FMN and iron-sulfur (Fe-S) centers, to quinones in the photosynthetic chain and possibly in a chloroplast respiratory chain. The immediate electron acceptor for the enzyme in this species is believed to be plastoquinone. Couples the redox reaction to proton translocation, and thus conserves the redox energy in a proton gradient. This chain is NAD(P)H-quinone oxidoreductase subunit 4L, chloroplastic, found in Platanus occidentalis (Sycamore).